Consider the following 308-residue polypeptide: Ribonuclease Z (308 aa).

Positions 63, 65, 67, 68, 141, 212, and 270 each coordinate Zn(2+). D67 serves as the catalytic Proton acceptor.

This sequence belongs to the RNase Z family. Homodimer. Zn(2+) serves as cofactor.

The enzyme catalyses Endonucleolytic cleavage of RNA, removing extra 3' nucleotides from tRNA precursor, generating 3' termini of tRNAs. A 3'-hydroxy group is left at the tRNA terminus and a 5'-phosphoryl group is left at the trailer molecule.. In terms of biological role, zinc phosphodiesterase, which displays some tRNA 3'-processing endonuclease activity. Probably involved in tRNA maturation, by removing a 3'-trailer from precursor tRNA. This is Ribonuclease Z from Pediococcus pentosaceus (strain ATCC 25745 / CCUG 21536 / LMG 10740 / 183-1w).